Here is a 382-residue protein sequence, read N- to C-terminus: Gap junction alpha-1 protein (382 aa).

Residues 2 to 23 (GDWSALGKLLDKVQAYSTAGGK) are Cytoplasmic-facing. S5 carries the post-translational modification Phosphoserine. A helical transmembrane segment spans residues 24 to 44 (VWLSVLFIFRILLLGTAVESA). Topologically, residues 45-76 (WGDEQSAFRCNTQQPGCENVCYDKSFPISHVR) are extracellular. Intrachain disulfides connect C54-C192 and C187-C198. The chain crosses the membrane as a helical span at residues 77 to 97 (FWVLQIIFVSVPTLLYLAHVF). Over 98–155 (YVMRKEEKLNKKEEELKVAQTDGVNVEMHLKQIEIKKFKYGIEEHGKVKMRGGLLRTY) the chain is Cytoplasmic. K144 is covalently cross-linked (Glycyl lysine isopeptide (Lys-Gly) (interchain with G-Cter in SUMO)). A helical membrane pass occupies residues 156–176 (IISILFKSVFEVAFLLIQWYI). Over 177–207 (YGFSLSAVYTCKRDPCPHQVDCFLSRPTEKT) the chain is Extracellular. A helical membrane pass occupies residues 208 to 228 (IFIIFMLVVSLVSLALNIIEL). The Cytoplasmic portion of the chain corresponds to 229-382 (FYVFFKGVKD…SRPRPDDLEI (154 aa)). K237 participates in a covalent cross-link: Glycyl lysine isopeptide (Lys-Gly) (interchain with G-Cter in SUMO). The interaction with NOV stretch occupies residues 244–382 (SDPYHATTGP…SRPRPDDLEI (139 aa)). A Phosphotyrosine modification is found at Y247. S255, S257, and S262 each carry phosphoserine. The interval 264-382 (KYAYFNGCSS…SRPRPDDLEI (119 aa)) is interaction with UBQLN4. S-nitrosocysteine is present on C271. A Phosphothreonine modification is found at T275. A phosphoserine mark is found at S306, S314, and S325. A compositionally biased stretch (polar residues) spans 317–332 (QNRMGQAGSTISNSHA). The disordered stretch occupies residues 317–382 (QNRMGQAGST…SRPRPDDLEI (66 aa)). Residue T326 is modified to Phosphothreonine. S328, S330, and S365 each carry phosphoserine. Positions 362–374 (RPSSRASSRASSR) are enriched in low complexity. S368 bears the Phosphoserine; by PKC/PRKCG and PKC/PRKCD mark. S369 and S373 each carry phosphoserine.

The protein belongs to the connexin family. Alpha-type (group II) subfamily. As to quaternary structure, a connexon is composed of a hexamer of connexins. Interacts with SGSM3. Interacts with RIC1/CIP150. Interacts with CNST and CSNK1D. Interacts (via C-terminus) with TJP1. Interacts (via C-terminus) with SRC (via SH3 domain). Interacts (not ubiquitinated) with UBQLN4 (via UBA domain). Interacts with NOV. Interacts with TMEM65. Interacts with ANK3/ANKG and PKP2. Post-translationally, contains at least one intramolecular disulfide bond. Phosphorylation at Ser-325, Ser-328 and Ser-330 by CK1 modulates gap junction assembly. Phosphorylated at Ser-368 by PRKCG; phosphorylation induces disassembly of gap junction plaques and inhibition of gap junction activity. Phosphorylation at Ser-368 by PRKCD triggers its internalization into small vesicles leading to proteasome-mediated degradation. In terms of processing, sumoylated with SUMO1, SUMO2 and SUMO3, which may regulate the level of functional Cx43 gap junctions at the plasma membrane. May be desumoylated by SENP1 or SENP2. Post-translationally, S-nitrosylation at Cys-271 is enriched at the muscle endothelial gap junction in arteries, it augments channel permeability and may regulate of smooth muscle cell to endothelial cell communication. Acetylated in the developing cortex; leading to delocalization from the cell membrane. In terms of tissue distribution, detected in ventricle and atrium (at protein level).

Its subcellular location is the cell membrane. The protein localises to the cell junction. It is found in the gap junction. The protein resides in the endoplasmic reticulum. Functionally, gap junction protein that acts as a regulator of bladder capacity. A gap junction consists of a cluster of closely packed pairs of transmembrane channels, the connexons, through which materials of low MW diffuse from one cell to a neighboring cell. Negative regulator of bladder functional capacity: acts by enhancing intercellular electrical and chemical transmission, thus sensitizing bladder muscles to cholinergic neural stimuli and causing them to contract. May play a role in cell growth inhibition through the regulation of NOV expression and localization. Plays an essential role in gap junction communication in the ventricles. The protein is Gap junction alpha-1 protein (Gja1) of Rattus norvegicus (Rat).